Reading from the N-terminus, the 711-residue chain is Polyribonucleotide nucleotidyltransferase (711 aa).

Mg(2+) contacts are provided by Asp494 and Asp500. The 61-residue stretch at 560–620 (PKIEIFGVDP…INVENAKSDI (61 aa)) folds into the KH domain. The region spanning 651 to 710 (GEEFDGVVKKIMDFGAFISLKDGIDGLLHVSKIKTQLSEGDTLRVKVEEIKRGKISLELC) is the S1 motif domain.

It belongs to the polyribonucleotide nucleotidyltransferase family. Mg(2+) is required as a cofactor.

The protein resides in the cytoplasm. It carries out the reaction RNA(n+1) + phosphate = RNA(n) + a ribonucleoside 5'-diphosphate. Involved in mRNA degradation. Catalyzes the phosphorolysis of single-stranded polyribonucleotides processively in the 3'- to 5'-direction. The chain is Polyribonucleotide nucleotidyltransferase from Campylobacter hominis (strain ATCC BAA-381 / DSM 21671 / CCUG 45161 / LMG 19568 / NCTC 13146 / CH001A).